Consider the following 737-residue polypeptide: Photosystem I P700 chlorophyll a apoprotein A2 (737 aa).

Helical transmembrane passes span 46–69 (LFST…FHIA), 135–158 (LYQG…LHLQ), 175–199 (LNHH…HVAI), 273–291 (IAHH…GHMY), 333–356 (LHFQ…QHMY), 372–398 (AALY…IFFI), 420–442 (AIIS…LYVH), and 520–538 (FLVH…LILV). Residues Cys562 and Cys571 each contribute to the [4Fe-4S] cluster site. 2 helical membrane-spanning segments follow: residues 578-599 (AFYL…YWHW) and 646-668 (LAVW…MFLI). His657, Met665, and Tyr673 together coordinate chlorophyll a. Trp674 contributes to the phylloquinone binding site. Residues 710 to 730 (VVGLAHFTVGYVLTYAAFLIA) form a helical membrane-spanning segment.

The protein belongs to the PsaA/PsaB family. As to quaternary structure, the PsaA/B heterodimer binds the P700 chlorophyll special pair and subsequent electron acceptors. PSI consists of a core antenna complex that captures photons, and an electron transfer chain that converts photonic excitation into a charge separation. The cyanobacterial PSI reaction center is composed of one copy each of PsaA,B,C,D,E,F,I,J,K,L,M and X, and forms trimeric complexes. The cofactor is PSI electron transfer chain: 5 chlorophyll a, 1 chlorophyll a', 2 phylloquinones and 3 4Fe-4S clusters. PSI core antenna: 90 chlorophyll a, 22 carotenoids, 3 phospholipids and 1 galactolipid. P700 is a chlorophyll a/chlorophyll a' dimer, A0 is one or more chlorophyll a, A1 is one or both phylloquinones and FX is a shared 4Fe-4S iron-sulfur center..

It localises to the cellular thylakoid membrane. The catalysed reaction is reduced [plastocyanin] + hnu + oxidized [2Fe-2S]-[ferredoxin] = oxidized [plastocyanin] + reduced [2Fe-2S]-[ferredoxin]. PsaA and PsaB bind P700, the primary electron donor of photosystem I (PSI), as well as the electron acceptors A0, A1 and FX. PSI is a plastocyanin/cytochrome c6-ferredoxin oxidoreductase, converting photonic excitation into a charge separation, which transfers an electron from the donor P700 chlorophyll pair to the spectroscopically characterized acceptors A0, A1, FX, FA and FB in turn. Oxidized P700 is reduced on the lumenal side of the thylakoid membrane by plastocyanin or cytochrome c6. The chain is Photosystem I P700 chlorophyll a apoprotein A2 from Synechococcus sp. (strain CC9605).